We begin with the raw amino-acid sequence, 372 residues long: Aminomethyltransferase (372 aa).

It belongs to the GcvT family. The glycine cleavage system is composed of four proteins: P, T, L and H.

It catalyses the reaction N(6)-[(R)-S(8)-aminomethyldihydrolipoyl]-L-lysyl-[protein] + (6S)-5,6,7,8-tetrahydrofolate = N(6)-[(R)-dihydrolipoyl]-L-lysyl-[protein] + (6R)-5,10-methylene-5,6,7,8-tetrahydrofolate + NH4(+). In terms of biological role, the glycine cleavage system catalyzes the degradation of glycine. This Synechocystis sp. (strain ATCC 27184 / PCC 6803 / Kazusa) protein is Aminomethyltransferase.